A 386-amino-acid polypeptide reads, in one-letter code: Putative nickel insertion protein (386 aa).

This sequence belongs to the LarC family.

This is Putative nickel insertion protein from Dictyoglomus thermophilum (strain ATCC 35947 / DSM 3960 / H-6-12).